The chain runs to 158 residues: uncharacterized protein (158 aa).

In terms of biological role, the presence of the two linear plasmids, termed pGKL1 and pGKL2, in strains of Kluyveromyces lactis confers the killer phenotype to the host cell, by promoting the secretion of a toxin able to inhibit the growth of sensitive strains. This is an uncharacterized protein from Kluyveromyces lactis (strain ATCC 8585 / CBS 2359 / DSM 70799 / NBRC 1267 / NRRL Y-1140 / WM37) (Yeast).